The sequence spans 150 residues: Avidin-related protein 7 (150 aa).

Positions 1–24 are cleaved as a signal peptide; sequence MVHATSPLLLLLLLSLALVAPGLS. The region spanning 26–147 is the Avidin-like domain; the sequence is RKCSLTGEWD…GYNNFTRQRT (122 aa). The cysteines at positions 28 and 105 are disulfide-linked. Biotin-binding residues include Asn-36 and Ser-40. Residues Asn-41 and Asn-54 are each glycosylated (N-linked (GlcNAc...) asparagine). Residues Tyr-57, Thr-59, and Asp-63 each contribute to the biotin site. Asn-93 carries an N-linked (GlcNAc...) asparagine glycan. Residues Ser-95, Ser-99, and Asn-140 each coordinate biotin. The N-linked (GlcNAc...) asparagine glycan is linked to Asn-141.

This sequence belongs to the avidin/streptavidin family. Homotetramer. Post-translationally, glycosylated.

The protein localises to the secreted. Its function is as follows. Forms a strong non-covalent specific complex with biotin. This chain is Avidin-related protein 7 (AVR7), found in Gallus gallus (Chicken).